A 165-amino-acid polypeptide reads, in one-letter code: Lipoprotein signal peptidase (165 aa).

Helical transmembrane passes span Pro9–Val29, Trp65–Leu85, and Thr97–Val119. Catalysis depends on residues Asp121 and Asp139. A helical transmembrane segment spans residues Val134–Phe154.

The protein belongs to the peptidase A8 family.

Its subcellular location is the cell inner membrane. It catalyses the reaction Release of signal peptides from bacterial membrane prolipoproteins. Hydrolyzes -Xaa-Yaa-Zaa-|-(S,diacylglyceryl)Cys-, in which Xaa is hydrophobic (preferably Leu), and Yaa (Ala or Ser) and Zaa (Gly or Ala) have small, neutral side chains.. It functions in the pathway protein modification; lipoprotein biosynthesis (signal peptide cleavage). This protein specifically catalyzes the removal of signal peptides from prolipoproteins. This is Lipoprotein signal peptidase from Histophilus somni (strain 2336) (Haemophilus somnus).